We begin with the raw amino-acid sequence, 321 residues long: MIFLTLEHILTHISFSIVSIVITIYLMTLLVHETVGLYDSSEKGLIATFFCITGFLVIRWIYSGHFPLSDLYESLMFLSWSFSIIHMVPYFTNHKNLLSTITAPSAIFTQGFATSGLLTEMHRSTKLVPALQSQWLMMHVSMMILSYAALLCGSLLSIALLVITFRKNVENFGKSKSNPFLIGPFSFGEIKYVNEINNVLRNTFLISFRNFRRYQVIQQLDCWSCRVISLGFIFLTIGILSGAVWANEAWGSYWNWDPKETWAFITWTIFAIYLHTRTNKNLQGINSAIVASIGFLIIWICYFGVNLLGIGLHSYGSFTSN.

8 helical membrane passes run 9-29 (ILTH…LMTL), 44-64 (GLIA…IYSG), 71-91 (LYES…VPYF), 97-117 (LLST…TSGL), 143-163 (MILS…LLVI), 227-247 (VISL…VWAN), 261-275 (TWAF…IYLH), and 288-308 (AIVA…VNLL).

The protein belongs to the CcmF/CycK/Ccl1/NrfE/CcsA family. May interact with Ccs1.

Its subcellular location is the plastid. The protein localises to the chloroplast thylakoid membrane. Its function is as follows. Required during biogenesis of c-type cytochromes (cytochrome c6 and cytochrome f) at the step of heme attachment. In Nandina domestica (Heavenly bamboo), this protein is Cytochrome c biogenesis protein CcsA.